The primary structure comprises 170 residues: Small ribosomal subunit protein bS18c (170 aa).

Residues 1–61 (MYTSKQPFLK…RRPRIGPGDR (61 aa)) are disordered. Positions 13–26 (QPFSKSKQTFNKSK) are enriched in polar residues. The span at 27 to 55 (QPFRKSKQTFRKFKQPFRKSKQPFRRRPR) shows a compositional bias: basic residues.

The protein belongs to the bacterial ribosomal protein bS18 family. Part of the 30S ribosomal subunit.

The protein localises to the plastid. Its subcellular location is the chloroplast. In Hordeum vulgare (Barley), this protein is Small ribosomal subunit protein bS18c.